The following is a 529-amino-acid chain: Ectonucleoside triphosphate diphosphohydrolase 3 (529 aa).

The Cytoplasmic segment spans residues 1–22 (MFTVMTRQPCEQAGFRALSRTP). A helical membrane pass occupies residues 23-43 (AIVTLVVLLVSIVVLVTLTLI). The Extracellular segment spans residues 44 to 485 (QIRHPQVLPP…PLIHLPIQPP (442 aa)). The N-linked (GlcNAc...) asparagine glycan is linked to Asn81. Cysteines 92 and 116 form a disulfide. Residue Asn149 is glycosylated (N-linked (GlcNAc...) asparagine). The active-site Proton acceptor is the Glu182. Residue 222–226 (GASTQ) participates in ATP binding. Asn238, Asn284, and Asn318 each carry an N-linked (GlcNAc...) asparagine glycan. 3 cysteine pairs are disulfide-bonded: Cys261–Cys308, Cys289–Cys334, and Cys347–Cys353. Asn381 and Asn392 each carry an N-linked (GlcNAc...) asparagine glycan. A disulfide bridge connects residues Cys399 and Cys422. An N-linked (GlcNAc...) asparagine glycan is attached at Asn454. The helical transmembrane segment at 486–506 (VFMGVLAFFTAIALLCLAFLL) threads the bilayer. Over 507–529 (YLCSSFRTKERSENAFDQAVDSD) the chain is Cytoplasmic.

It belongs to the GDA1/CD39 NTPase family. The cofactor is Ca(2+). Mg(2+) serves as cofactor.

The protein resides in the cell membrane. The catalysed reaction is a ribonucleoside 5'-triphosphate + 2 H2O = a ribonucleoside 5'-phosphate + 2 phosphate + 2 H(+). Catalyzes the hydrolysis of nucleoside triphosphates and diphosphates. Has a threefold preference for the hydrolysis of ATP and UTP over ADP and UDP. In Mus musculus (Mouse), this protein is Ectonucleoside triphosphate diphosphohydrolase 3.